We begin with the raw amino-acid sequence, 282 residues long: Kanosamine-6-phosphate phosphatase (282 aa).

D25 serves as the catalytic Nucleophile. Mg(2+) is bound by residues D25 and D27. K209 is a binding site for phosphate. Positions 232 and 233 each coordinate Mg(2+). Position 235 (N235) interacts with phosphate.

It belongs to the HAD-like hydrolase superfamily. Cof family. As to quaternary structure, homotetramer. It depends on Mg(2+) as a cofactor.

The catalysed reaction is D-kanosamine 6-phosphate + H2O = kanosamine + phosphate. Its pathway is antibiotic biosynthesis; kanosamine biosynthesis. Its function is as follows. Involved in the biosynthesis of kanosamine (3-amino-3-deoxy-D-glucose), which is known to have antibiotic and antifungal properties, and to be a precursor of the antibiotic neotrehalosadiamine (3,3'-diamino-3,3'-dideoxy-alpha,beta-trehalose (NTD)). Catalyzes the dephosphorylation of kanosamine 6-phosphate to yield kanosamine. There is a trace amount of activity using glucosamine-6-phosphate. The protein is Kanosamine-6-phosphate phosphatase (ntdB) of Bacillus subtilis (strain 168).